The chain runs to 304 residues: MAEHLASIFGTEKDRVNCPFYFKIGACRHGDRCSRLHNRPTVSPTIVLANMYQRPDMITPGVDAQGQPIDPEKMQEHFEDFYEDIYEELSKFGEVETLNVCDNLADHMIGNVYVQFREEEQAVAAHNALQGRFYSGRPIIVEYSPVTDFREATCRQFEENSCNRGGYCNFMHVKQIGRELRRKLYGGRSRRSHGRSRSPSPRHRRGNRDRDDFRRERDGYRGGGDGYRGGGGGGGGDGYRGGDSYRGGGGGGRRGGGSRYDRYDDGGRRRHGSPPRRARSPVRESSEERRAKIEQWNREREEKP.

The C3H1-type 1 zinc finger occupies 12–40 (EKDRVNCPFYFKIGACRHGDRCSRLHNRP). An RRM domain is found at 44–146 (PTIVLANMYQ…RPIIVEYSPV (103 aa)). A C3H1-type 2 zinc finger spans residues 148–175 (DFREATCRQFEENSCNRGGYCNFMHVKQ). A compositionally biased stretch (basic residues) spans 184 to 207 (LYGGRSRRSHGRSRSPSPRHRRGN). The tract at residues 184–304 (LYGGRSRRSH…QWNREREEKP (121 aa)) is disordered. The span at 208-220 (RDRDDFRRERDGY) shows a compositional bias: basic and acidic residues. Residues 221–258 (RGGGDGYRGGGGGGGGDGYRGGDSYRGGGGGGRRGGGS) are compositionally biased toward gly residues. Basic residues predominate over residues 268–280 (RRRHGSPPRRARS). Basic and acidic residues predominate over residues 281–304 (PVRESSEERRAKIEQWNREREEKP).

The protein belongs to the splicing factor SR family.

Its subcellular location is the nucleus. Necessary for the splicing of pre-mRNA. The polypeptide is Splicing factor U2af small subunit B (U2AF35B) (Oryza sativa subsp. japonica (Rice)).